The chain runs to 170 residues: MVRKPAKMYRNLAKKAYTRREYMGGVPGSKIVQFDMGNLTEDYPVELSIVVDETCQIRHTALEAARIGINRQLQKEVGRANFHLKIRTFPHHVLRENKQATGAGADRVSEGMRLAFGKAVGTAARVEKGQKVFSVWTSPQYVDKAKVSLKRGIYKLPTPARIVEERAPAA.

It belongs to the universal ribosomal protein uL16 family.

The protein is Large ribosomal subunit protein uL16 of Methanoculleus marisnigri (strain ATCC 35101 / DSM 1498 / JR1).